Reading from the N-terminus, the 403-residue chain is MAKLTVRDLDAKGKEVLMRVDFNVPLKDGEITNDARIVAALPTIKFLLDQGARLVLTSHLGRPKNEPDPAFSLKPVAARLSELLGKDVKFVSAAIGPEAEAARAAMKDGDVVLLENVRFYPGEKKNDPEFAKSLLGNATLFVNDAFGTAHRAHASTEGVTHFAEKSAMGFLIERELEYLEGKLENPEKPFVVIMGGAKVSDKIEVLSKLMEKADTFLIGGAMANTFLAAEGYDLGASKIEGDKLDLAREILAAAKAKGVKFLLPADVRVAMKFEDGAETFCTAPFAEGGKVPEGGMAIDIGDKAIEEFSAIIKDAKTVLWNGPMGVFEMDCFAKGTKEVAEALADSTAISIVGGGDSVTAAKKFKVQDKLSFCSTGGGASLELLEGKVLPGVGALTDKCCCGK.

Residues Asp21–Asn23, Arg36, His59–Arg62, Arg118, and Arg151 contribute to the substrate site. Residues Lys202, Glu328, and Gly354–Ser357 each bind ATP.

Belongs to the phosphoglycerate kinase family. As to quaternary structure, monomer.

It is found in the cytoplasm. The enzyme catalyses (2R)-3-phosphoglycerate + ATP = (2R)-3-phospho-glyceroyl phosphate + ADP. It participates in carbohydrate degradation; glycolysis; pyruvate from D-glyceraldehyde 3-phosphate: step 2/5. The sequence is that of Phosphoglycerate kinase from Akkermansia muciniphila (strain ATCC BAA-835 / DSM 22959 / JCM 33894 / BCRC 81048 / CCUG 64013 / CIP 107961 / Muc).